A 951-amino-acid chain; its full sequence is Glycine dehydrogenase (decarboxylating) (951 aa).

Lys-709 is subject to N6-(pyridoxal phosphate)lysine.

It belongs to the GcvP family. In terms of assembly, the glycine cleavage system is composed of four proteins: P, T, L and H. Requires pyridoxal 5'-phosphate as cofactor.

The enzyme catalyses N(6)-[(R)-lipoyl]-L-lysyl-[glycine-cleavage complex H protein] + glycine + H(+) = N(6)-[(R)-S(8)-aminomethyldihydrolipoyl]-L-lysyl-[glycine-cleavage complex H protein] + CO2. The glycine cleavage system catalyzes the degradation of glycine. The P protein binds the alpha-amino group of glycine through its pyridoxal phosphate cofactor; CO(2) is released and the remaining methylamine moiety is then transferred to the lipoamide cofactor of the H protein. This is Glycine dehydrogenase (decarboxylating) from Gluconobacter oxydans (strain 621H) (Gluconobacter suboxydans).